A 315-amino-acid chain; its full sequence is Tyrosine recombinase XerC (315 aa).

Positions 1–103 (MITSFYAFLD…AIKSFARFCV (103 aa)) constitute a Core-binding (CB) domain. One can recognise a Tyr recombinase domain in the interval 124–306 (ELPSPLTYEQ…SMKLKKQIHD (183 aa)). Active-site residues include Arg-164, Lys-188, His-258, Arg-261, and His-284. The active-site O-(3'-phospho-DNA)-tyrosine intermediate is Tyr-293.

It belongs to the 'phage' integrase family. XerC subfamily. As to quaternary structure, forms a cyclic heterotetrameric complex composed of two molecules of XerC and two molecules of XerD.

It is found in the cytoplasm. Its function is as follows. Site-specific tyrosine recombinase, which acts by catalyzing the cutting and rejoining of the recombining DNA molecules. The XerC-XerD complex is essential to convert dimers of the bacterial chromosome into monomers to permit their segregation at cell division. It also contributes to the segregational stability of plasmids. The chain is Tyrosine recombinase XerC from Chlamydia trachomatis serovar L2b (strain UCH-1/proctitis).